The chain runs to 333 residues: Taste receptor type 2 member 110 (333 aa).

The Extracellular segment spans residues 1 to 13; that stretch reads MFSQIISTSDIFT. The helical transmembrane segment at 14–34 threads the bilayer; sequence FTIILFVELVIGILGNGFIAL. Topologically, residues 35–60 are cytoplasmic; the sequence is VNIMDWTKRRSISSADQILTALAITR. Residues 61 to 81 traverse the membrane as a helical segment; the sequence is FLYVWFMIICILLFMLCPHLL. Topologically, residues 82-89 are extracellular; the sequence is TRSEIVTS. A helical transmembrane segment spans residues 90-110; it reads IGIIWIVNNHFSVWLATCLGV. Residues 111–133 are Cytoplasmic-facing; that stretch reads FYFLKIANFSNSLFLYLKWRVKK. A helical transmembrane segment spans residues 134-154; it reads VVLMIIQVSMIFLILNLLSLS. The Extracellular segment spans residues 155-205; it reads MYDQFSIDVYEGNTSYNLGDSTPFPTISLFINSSKVFVITNSSHIFLPINS. N186 and N195 each carry an N-linked (GlcNAc...) asparagine glycan. Residues 206 to 226 traverse the membrane as a helical segment; it reads LFMLIPFTVSLVAFLMLIFSL. At 227–255 the chain is on the cytoplasmic side; the sequence is WKHHKKMQVNAKPPRDASTMAHIKALQTG. A helical transmembrane segment spans residues 256 to 276; sequence FSFLLLYAVYLLFIVIGMLSL. The Extracellular segment spans residues 277-283; the sequence is RLIGGKL. The helical transmembrane segment at 284 to 304 threads the bilayer; that stretch reads ILLFDHISGIGFPISHSFVLI. Residues 305–333 lie on the Cytoplasmic side of the membrane; that stretch reads LGNNKLRQASLSVLHCLRCRSKDMDTMGP.

Belongs to the G-protein coupled receptor T2R family.

The protein localises to the membrane. Gustducin-coupled receptor implicated in the perception of bitter compounds in the oral cavity and the gastrointestinal tract. Signals through PLCB2 and the calcium-regulated cation channel TRPM5. The chain is Taste receptor type 2 member 110 from Mus musculus (Mouse).